We begin with the raw amino-acid sequence, 79 residues long: Ixosin (79 aa).

A propeptide spans 1 to 56 (MSAHKVQIGLSSGQFRVALQVPSVRLKGLGSFHTGSIVLPSQGSLREDQISLHNQD) (removed in mature form).

Has antifungal activity against C.albicans. Has antibacterial activity against the Gram-positive bacterium S.aureus and the Gram-negative bacterium E.coli. Lacks hemolytic activity against rabbit erythrocytes. The protein is Ixosin of Ixodes sinensis (Hard tick).